Consider the following 340-residue polypeptide: MRVYYDRDCDVNLIKEKKVAILGYGSQGHAHALNLRDSGAKNLVIALREGSPSAKKAEAEGLQVMGIAEAAAWCDVIMFTMPDELQAETYKKYVHDNIKPGAAIAFAHGLNVHFGLIEPKEGVDVIMMAPKGPGHTVRGEYTKGGGVPCLVAVHNDASGSALETALSYCSAIGGGRSGIIETNFREECETDLFGEQAVLCGGLVELIRCGFETLVEAGYAPEMAYFECLHEVKLIVDLIYEGGIANMDYSISNTAEYGQYVTGPRILKYDETKARMKEVLADIQQGKFVRDFMLENAVGQPTIKASRRANDEHAIEATGAKLREMMPWISAGKMVDKSKN.

The 182-residue stretch at 1–182 folds into the KARI N-terminal Rossmann domain; it reads MRVYYDRDCD…GGGRSGIIET (182 aa). Residues 24–27, Arg-48, Ser-51, Ser-53, and 83–86 each bind NADP(+); these read YGSQ and DELQ. His-108 is a catalytic residue. An NADP(+)-binding site is contributed by Gly-134. The 147-residue stretch at 183–329 folds into the KARI C-terminal knotted domain; it reads NFREECETDL…AKLREMMPWI (147 aa). Asp-191, Glu-195, Glu-227, and Glu-231 together coordinate Mg(2+). Residue Ser-252 participates in substrate binding.

It belongs to the ketol-acid reductoisomerase family. Requires Mg(2+) as cofactor.

It catalyses the reaction (2R)-2,3-dihydroxy-3-methylbutanoate + NADP(+) = (2S)-2-acetolactate + NADPH + H(+). The enzyme catalyses (2R,3R)-2,3-dihydroxy-3-methylpentanoate + NADP(+) = (S)-2-ethyl-2-hydroxy-3-oxobutanoate + NADPH + H(+). Its pathway is amino-acid biosynthesis; L-isoleucine biosynthesis; L-isoleucine from 2-oxobutanoate: step 2/4. It functions in the pathway amino-acid biosynthesis; L-valine biosynthesis; L-valine from pyruvate: step 2/4. In terms of biological role, involved in the biosynthesis of branched-chain amino acids (BCAA). Catalyzes an alkyl-migration followed by a ketol-acid reduction of (S)-2-acetolactate (S2AL) to yield (R)-2,3-dihydroxy-isovalerate. In the isomerase reaction, S2AL is rearranged via a Mg-dependent methyl migration to produce 3-hydroxy-3-methyl-2-ketobutyrate (HMKB). In the reductase reaction, this 2-ketoacid undergoes a metal-dependent reduction by NADPH to yield (R)-2,3-dihydroxy-isovalerate. The polypeptide is Ketol-acid reductoisomerase (NADP(+)) (Ruegeria sp. (strain TM1040) (Silicibacter sp.)).